An 81-amino-acid chain; its full sequence is MSLPAFTEISSFSNTEISVAIIETENQLFNLRFKKATRQSFKSHEIKNAKRRLAQLKTLLSLRLENLDQKDDNLINTLITN.

It belongs to the universal ribosomal protein uL29 family.

It is found in the plastid. Its subcellular location is the chloroplast. This Phaeodactylum tricornutum (strain CCAP 1055/1) protein is Large ribosomal subunit protein uL29c.